The chain runs to 246 residues: Probable transcriptional regulatory protein CTC_02215 (246 aa).

Belongs to the TACO1 family.

It is found in the cytoplasm. This Clostridium tetani (strain Massachusetts / E88) protein is Probable transcriptional regulatory protein CTC_02215.